We begin with the raw amino-acid sequence, 1058 residues long: Carbamoyl phosphate synthase large chain (1058 aa).

Residues 1-401 are carboxyphosphate synthetic domain; it reads MPKRTDIQKI…SLLKACRSLE (401 aa). Residues R129, R169, G175, G176, R208, I210, E215, G241, I242, H243, Q284, and E298 each contribute to the ATP site. One can recognise an ATP-grasp 1 domain in the interval 133–327; sequence KQLMEELEQP…IAKLAAKIAV (195 aa). Q284, E298, and N300 together coordinate Mg(2+). Mn(2+) contacts are provided by Q284, E298, and N300. Residues 402–546 form an oligomerization domain region; the sequence is IGVHHNEIPE…YSTYGWENES (145 aa). The carbamoyl phosphate synthetic domain stretch occupies residues 547–929; that stretch reads IRSDKESVLV…ALYKAFEASY (383 aa). The region spanning 671 to 861 is the ATP-grasp 2 domain; that stretch reads EQALKELDIP…MAQVATKLIL (191 aa). Residues R707, S746, I748, E752, G777, V778, H779, S780, Q820, and E832 each contribute to the ATP site. Mg(2+) is bound by residues Q820, E832, and N834. Positions 820, 832, and 834 each coordinate Mn(2+). Positions 930–1058 constitute an MGS-like domain; that stretch reads LHLPTFGNVV…ESRSFVTEAI (129 aa). The interval 930-1058 is allosteric domain; sequence LHLPTFGNVV…ESRSFVTEAI (129 aa).

Belongs to the CarB family. As to quaternary structure, composed of two chains; the small (or glutamine) chain promotes the hydrolysis of glutamine to ammonia, which is used by the large (or ammonia) chain to synthesize carbamoyl phosphate. Tetramer of heterodimers (alpha,beta)4. Requires Mg(2+) as cofactor. The cofactor is Mn(2+).

The catalysed reaction is hydrogencarbonate + L-glutamine + 2 ATP + H2O = carbamoyl phosphate + L-glutamate + 2 ADP + phosphate + 2 H(+). It catalyses the reaction hydrogencarbonate + NH4(+) + 2 ATP = carbamoyl phosphate + 2 ADP + phosphate + 2 H(+). The protein operates within amino-acid biosynthesis; L-arginine biosynthesis; carbamoyl phosphate from bicarbonate: step 1/1. It participates in pyrimidine metabolism; UMP biosynthesis via de novo pathway; (S)-dihydroorotate from bicarbonate: step 1/3. Functionally, large subunit of the glutamine-dependent carbamoyl phosphate synthetase (CPSase). CPSase catalyzes the formation of carbamoyl phosphate from the ammonia moiety of glutamine, carbonate, and phosphate donated by ATP, constituting the first step of 2 biosynthetic pathways, one leading to arginine and/or urea and the other to pyrimidine nucleotides. The large subunit (synthetase) binds the substrates ammonia (free or transferred from glutamine from the small subunit), hydrogencarbonate and ATP and carries out an ATP-coupled ligase reaction, activating hydrogencarbonate by forming carboxy phosphate which reacts with ammonia to form carbamoyl phosphate. This chain is Carbamoyl phosphate synthase large chain, found in Streptococcus pneumoniae (strain P1031).